The sequence spans 128 residues: Cystatin-12 (128 aa).

The signal sequence occupies residues 1-21 (MLWKSVLSVALIVLGIHDCSF). Intrachain disulfides connect cysteine 82–cysteine 92 and cysteine 105–cysteine 125. Asparagine 122 is a glycosylation site (N-linked (GlcNAc...) asparagine).

The protein belongs to the cystatin family. Located at the very proximal caput epididymis (at protein level). Expressed in epididymis, Sertoli cells and testis. Also found to be weakly expressed in ovary and prostate.

The protein localises to the secreted. In terms of biological role, may play a specialized role in spermatogenesis. The sequence is that of Cystatin-12 (Cst12) from Mus musculus (Mouse).